We begin with the raw amino-acid sequence, 193 residues long: MRWLPFSALLLWALCLHSASADNNGVKKMKMQFATGPLLKFQICVSUGYKRVFEEYTQALYQRYPDIRIEGENYLPLPLYRHIASFLSMFKLLLIGVIILGKDPFALCGMQAPGIWVWSQENKIYACMMVFFFSNMIENQCMSTGAFEITLNDVPVWSKLESGHLPSMQQLVQILENEMKMSMHMDTLPPHQS.

Residues 1-21 (MRWLPFSALLLWALCLHSASA) form the signal peptide. The cysteinyl-selenocysteine (Cys-Sec) cross-link spans 44–47 (CVSU). Position 47 (Sec47) is a non-standard amino acid, selenocysteine. A helical transmembrane segment spans residues 83-101 (IASFLSMFKLLLIGVIILG).

It belongs to the SelWTH family. Selenoprotein T subfamily. Post-translationally, may contain a selenide-sulfide bond between Cys-44 and Sec-47. This bond is speculated to serve as redox-active pair. As to expression, expressed in embryonic olfactory vesicles and the photoreceptor cell layer of the embryonic retina. Low level in embryonic epiphysis.

Its subcellular location is the endoplasmic reticulum membrane. The catalysed reaction is [thioredoxin]-dithiol + NADP(+) = [thioredoxin]-disulfide + NADPH + H(+). Selenoprotein with thioredoxin reductase-like oxidoreductase activity. In Danio rerio (Zebrafish), this protein is Thioredoxin reductase-like selenoprotein T1a.